The chain runs to 153 residues: Ribosome maturation factor RimP (153 aa).

It belongs to the RimP family.

Its subcellular location is the cytoplasm. Its function is as follows. Required for maturation of 30S ribosomal subunits. This is Ribosome maturation factor RimP from Clostridium botulinum (strain ATCC 19397 / Type A).